We begin with the raw amino-acid sequence, 116 residues long: Aspartate 1-decarboxylase (116 aa).

Residue serine 25 is the Schiff-base intermediate with substrate; via pyruvic acid of the active site. Serine 25 bears the Pyruvic acid (Ser) mark. Threonine 57 serves as a coordination point for substrate. The active-site Proton donor is tyrosine 58. Glycine 73–alanine 75 provides a ligand contact to substrate.

Belongs to the PanD family. As to quaternary structure, heterooctamer of four alpha and four beta subunits. It depends on pyruvate as a cofactor. Is synthesized initially as an inactive proenzyme, which is activated by self-cleavage at a specific serine bond to produce a beta-subunit with a hydroxyl group at its C-terminus and an alpha-subunit with a pyruvoyl group at its N-terminus.

It is found in the cytoplasm. It carries out the reaction L-aspartate + H(+) = beta-alanine + CO2. It functions in the pathway cofactor biosynthesis; (R)-pantothenate biosynthesis; beta-alanine from L-aspartate: step 1/1. Catalyzes the pyruvoyl-dependent decarboxylation of aspartate to produce beta-alanine. This chain is Aspartate 1-decarboxylase, found in Syntrophus aciditrophicus (strain SB).